We begin with the raw amino-acid sequence, 180 residues long: Nucleoside-triphosphatase THEP1 (180 aa).

ATP is bound by residues 9-16 and 104-111; these read GPAGVGKT and LIVIDEIG.

It belongs to the THEP1 NTPase family.

The catalysed reaction is a ribonucleoside 5'-triphosphate + H2O = a ribonucleoside 5'-diphosphate + phosphate + H(+). Its function is as follows. Has nucleotide phosphatase activity towards ATP, GTP, CTP, TTP and UTP. May hydrolyze nucleoside diphosphates with lower efficiency. The chain is Nucleoside-triphosphatase THEP1 from Thermococcus kodakarensis (strain ATCC BAA-918 / JCM 12380 / KOD1) (Pyrococcus kodakaraensis (strain KOD1)).